A 98-amino-acid chain; its full sequence is Small ribosomal subunit protein uS19 (98 aa).

Residues 77 to 98 (TRTYRGHAGGKAEKGGSAPKRK) are disordered.

This sequence belongs to the universal ribosomal protein uS19 family.

Functionally, protein S19 forms a complex with S13 that binds strongly to the 16S ribosomal RNA. In Prosthecochloris aestuarii (strain DSM 271 / SK 413), this protein is Small ribosomal subunit protein uS19.